A 140-amino-acid chain; its full sequence is uncharacterized protein (140 aa).

This is an uncharacterized protein from Acanthamoeba polyphaga mimivirus (APMV).